A 476-amino-acid chain; its full sequence is MATLIHTLTDHSDDVNCCAFSSSCLATCSLDKTIRIYSLNDFTELPYSPLKGHTYAVHCCCFSPSGHTLASCSTDGATIIWDTSDGRMLAVLEQPTGSPVRVCRFSPESTYLVSGAADGSVVLWNVHSMKFYRSGNVKDGSLVACAFSPGGNFFVTGSSCGDLTVWDDKMRCLCNEKAHDLGVTCCDISSHPVSDGEHASGCFQMASCGQDNKIKVWFILFADFLGGELRYKCTLSGHSAPVLTCAFSYDGQMLVSGSVDKCVIIYETNTGNILHTLSQHTRYVTTCAFAPCSLFLATGSMDKTVHIWKLDNKQPCAGNTIENDSKIRTAENWSEDDVSAWLCAQGFAELVGLFKANNIDGKELVNLTRESLIHELKMSLWLRSKILQKIEELRMKMVSVPVAVPDEFLCPITRELMKDPVIAADGYSYEKEAMENWISNNRRSSPMTNLPLPSLVLTPNRTLKMAISRWLETQQK.

WD repeat units lie at residues Asp10 to Tyr47, Gly52 to Val91, Pro95 to Ser134, Val137 to Glu176, Ala178 to Gly227, Gly237 to Thr276, and Gln279 to Gly318. Positions Trp333 to Lys396 constitute an SAM domain. In terms of domain architecture, U-box spans Ala403–Lys476.

This is WD repeat, SAM and U-box domain-containing protein 1 (WDSUB1) from Gallus gallus (Chicken).